The sequence spans 160 residues: Protein MGF 300-2R (160 aa).

The protein belongs to the asfivirus MGF 300 family.

Plays a role in virus cell tropism, and may be required for efficient virus replication in macrophages. In Ornithodoros (relapsing fever ticks), this protein is Protein MGF 300-2R.